A 157-amino-acid chain; its full sequence is Probable calcium-binding protein CML23 (157 aa).

4 EF-hand domains span residues 11–46, 47–82, 86–121, and 122–157; these read GSME…LSPN, ASQE…SDQS, SAIR…LGEK, and CSIQ…NGSA. Residues D24, N26, D28, K30, E35, D60, D62, N64, E71, D99, D101, N103, R105, E110, D135, D137, D139, C141, and E146 each contribute to the Ca(2+) site.

In terms of biological role, potential calcium sensor. This Arabidopsis thaliana (Mouse-ear cress) protein is Probable calcium-binding protein CML23 (CML23).